A 119-amino-acid polypeptide reads, in one-letter code: Large ribosomal subunit protein bL19 (119 aa).

This sequence belongs to the bacterial ribosomal protein bL19 family.

This protein is located at the 30S-50S ribosomal subunit interface and may play a role in the structure and function of the aminoacyl-tRNA binding site. This Pseudoalteromonas translucida (strain TAC 125) protein is Large ribosomal subunit protein bL19.